A 666-amino-acid polypeptide reads, in one-letter code: Probable potassium transport system protein Kup (666 aa).

12 helical membrane passes run G16–M36, I58–L78, T99–L119, I141–A161, T167–I187, I221–L241, W253–A273, F292–I312, T343–F363, Y373–I393, V402–V422, and F424–I444.

Belongs to the HAK/KUP transporter (TC 2.A.72) family.

It is found in the cell membrane. It carries out the reaction K(+)(in) + H(+)(in) = K(+)(out) + H(+)(out). Transport of potassium into the cell. Likely operates as a K(+):H(+) symporter. This Streptococcus agalactiae serotype III (strain NEM316) protein is Probable potassium transport system protein Kup.